The following is a 1393-amino-acid chain: RNA polymerase II-associated protein 1 (1393 aa).

Disordered stretches follow at residues 34–53, 61–94, and 266–295; these read KKGNRGGGDANSDRPPLQDH, NLPDLPPALVPSPPKRARPSPGHCLPEDEDPEER, and SHTQEQTGETASEEQRPGGPSANVTKEEPL. Positions 64–74 are enriched in pro residues; that stretch reads DLPPALVPSPP. Position 72 is a phosphoserine (S72). A Phosphothreonine modification is found at T321. Residues 496 to 531 are disordered; it reads PSQEDKEDEDEDEECPAGKAKRKSPEEESRPPPDLA. Residues 500–510 are compositionally biased toward acidic residues; that stretch reads DKEDEDEDEEC. Over residues 518 to 531 the composition is skewed to basic and acidic residues; that stretch reads KSPEEESRPPPDLA. The residue at position 1121 (S1121) is a Phosphoserine.

Belongs to the RPAP1 family. Part of an RNA polymerase II complex that contains POLR2A, POLR2B, POLR2C, POLR2D, POLR2E, POLR2F, POLR2G, POLR2H, POLR2I, POLR2J, POLR2K, POLR2L, RPAP1, FCP1 plus the general transcription factors TFIIB and TFIIF.

Its subcellular location is the nucleus. Functionally, forms an interface between the RNA polymerase II enzyme and chaperone/scaffolding protein, suggesting that it is required to connect RNA polymerase II to regulators of protein complex formation. Required for interaction of the RNA polymerase II complex with acetylated histone H3. The protein is RNA polymerase II-associated protein 1 (RPAP1) of Homo sapiens (Human).